The following is a 1431-amino-acid chain: Caskin-1 (1431 aa).

ANK repeat units follow at residues 48–77, 81–110, 114–143, 147–176, 188–217, and 220–249; these read DGFS…AVDI, KGMR…AVNV, EGHI…NPCM, SGKT…CAAL, NGTS…DINR, and KSGT…NAQV. Y253 bears the Phosphotyrosine mark. One can recognise an SH3 domain in the interval 281 to 347; the sequence is SAALQVRATK…PSSLGEAIVK (67 aa). Positions 348–372 are disordered; that stretch reads RAGSRTGSEPSPPQGGGSLGPSAPP. S358 is subject to Phosphoserine. Residues 375–471 are CASK-binding; that stretch reads IWVLRKPFAG…PKKLESASAS (97 aa). An Omega-N-methylarginine modification is found at R398. Residues 420 to 430 are compositionally biased toward polar residues; sequence SQKSVSESSPG. Positions 420-471 are disordered; the sequence is SQKSVSESSPGDSPVKPPEGSSGAARSQPPAAHAGQVYGEQPPKKLESASAS. Phosphoserine is present on residues S423 and S432. 2 consecutive SAM domains span residues 476 to 539 and 545 to 609; these read KSAE…LNIP and HKPA…LAEL. 2 positions are modified to phosphoserine: S637 and S650. Low complexity predominate over residues 669–679; sequence LSGPAEAGAAA. 2 disordered regions span residues 669–1000 and 1016–1041; these read LSGP…TGSA and GGGG…EPGR. The span at 692–712 shows a compositional bias: polar residues; sequence RTTSRESSLSGRARHISSSQE. Phosphoserine occurs at positions 723 and 728. The residue at position 741 (T741) is a Phosphothreonine. Position 791 is a phosphoserine (S791). Residues 848–860 show a composition bias toward pro residues; the sequence is PPAPGPAPPPVPA. Residues S891, S893, and S989 each carry the phosphoserine modification. Positions 1028–1037 are enriched in pro residues; the sequence is GHPTPRPASP. A Phosphothreonine modification is found at T1067. Residue S1069 is modified to Phosphoserine. 2 disordered regions span residues 1072–1372 and 1389–1410; these read VTGL…RQKL and KIRQ…STGS. Positions 1148–1160 are enriched in basic and acidic residues; the sequence is DTVKRRPKAKEPD. The segment covering 1191–1215 has biased composition (pro residues); sequence PELPPPPPPAEPPPADLMQLPPLPL. Residues 1236 to 1247 show a composition bias toward polar residues; it reads QPVSKIQGSPTP. The residue at position 1259 (S1259) is a Phosphoserine. T1268 carries the phosphothreonine modification. Positions 1268 to 1283 are enriched in pro residues; that stretch reads TPPPVSPKPPPPPTAP. Low complexity-rich tracts occupy residues 1284–1299, 1309–1327, and 1345–1359; these read KPAK…SATP, PPAA…SASP, and PRAA…PVAS. S1363 is subject to Phosphoserine. Residues 1389-1407 are compositionally biased toward basic and acidic residues; the sequence is KIRQEDGQGPRPSSIEEKS.

As to quaternary structure, binds the CaM kinase domain of CASK. Forms a ternary complex with CASK and LIN7A, LIN7B or LIN7C. Competes with APBA1 that forms a similar complex with CASK and LIN7 proteins. The tripartite complex CASKIN1/CASK/LIN7(A/B/C) binds the cytoplasmic tail of NRXN1. Polymerizes, via the tandem SAM domains, to form long, 8 nM wide fibers, upon which other proteins can assemble.

The protein resides in the cytoplasm. Functionally, may link the scaffolding protein CASK to downstream intracellular effectors. The protein is Caskin-1 (Caskin1) of Mus musculus (Mouse).